A 706-amino-acid chain; its full sequence is Elongation factor G (706 aa).

Residues 8–290 (KRYRNIGIVA…GVIEYMPSPT (283 aa)) form the tr-type G domain. GTP contacts are provided by residues 17 to 24 (AHVDAGKT), 88 to 92 (DTPGH), and 142 to 145 (NKMD).

It belongs to the TRAFAC class translation factor GTPase superfamily. Classic translation factor GTPase family. EF-G/EF-2 subfamily.

The protein resides in the cytoplasm. Functionally, catalyzes the GTP-dependent ribosomal translocation step during translation elongation. During this step, the ribosome changes from the pre-translocational (PRE) to the post-translocational (POST) state as the newly formed A-site-bound peptidyl-tRNA and P-site-bound deacylated tRNA move to the P and E sites, respectively. Catalyzes the coordinated movement of the two tRNA molecules, the mRNA and conformational changes in the ribosome. The sequence is that of Elongation factor G from Chromohalobacter salexigens (strain ATCC BAA-138 / DSM 3043 / CIP 106854 / NCIMB 13768 / 1H11).